We begin with the raw amino-acid sequence, 218 residues long: Ribosomal RNA large subunit methyltransferase E (218 aa).

S-adenosyl-L-methionine is bound by residues Gly64, Trp66, Asp92, Asp108, and Asp133. The active-site Proton acceptor is Lys173.

Belongs to the class I-like SAM-binding methyltransferase superfamily. RNA methyltransferase RlmE family.

It localises to the cytoplasm. The enzyme catalyses uridine(2552) in 23S rRNA + S-adenosyl-L-methionine = 2'-O-methyluridine(2552) in 23S rRNA + S-adenosyl-L-homocysteine + H(+). Functionally, specifically methylates the uridine in position 2552 of 23S rRNA at the 2'-O position of the ribose in the fully assembled 50S ribosomal subunit. The protein is Ribosomal RNA large subunit methyltransferase E of Paracidovorax citrulli (strain AAC00-1) (Acidovorax citrulli).